A 310-amino-acid polypeptide reads, in one-letter code: tRNA dimethylallyltransferase (310 aa).

Residue 14-21 participates in ATP binding; the sequence is GPTASGKT. Substrate is bound at residue 16–21; that stretch reads TASGKT. Residues 39–42 are interaction with substrate tRNA; that stretch reads DSMQ.

It belongs to the IPP transferase family. As to quaternary structure, monomer. It depends on Mg(2+) as a cofactor.

It carries out the reaction adenosine(37) in tRNA + dimethylallyl diphosphate = N(6)-dimethylallyladenosine(37) in tRNA + diphosphate. Catalyzes the transfer of a dimethylallyl group onto the adenine at position 37 in tRNAs that read codons beginning with uridine, leading to the formation of N6-(dimethylallyl)adenosine (i(6)A). The polypeptide is tRNA dimethylallyltransferase (Corynebacterium jeikeium (strain K411)).